We begin with the raw amino-acid sequence, 98 residues long: Acylphosphatase-1 (98 aa).

In terms of domain architecture, Acylphosphatase-like spans 8–98; it reads SVDYEVFGKV…LEHSTFSICK (91 aa). Catalysis depends on residues Arg23 and Asn41.

The protein belongs to the acylphosphatase family.

The enzyme catalyses an acyl phosphate + H2O = a carboxylate + phosphate + H(+). The polypeptide is Acylphosphatase-1 (acyp1) (Xenopus tropicalis (Western clawed frog)).